We begin with the raw amino-acid sequence, 487 residues long: Probable glycine dehydrogenase (decarboxylating) subunit 2 (487 aa).

Position 273 is an N6-(pyridoxal phosphate)lysine (K273).

Belongs to the GcvP family. C-terminal subunit subfamily. As to quaternary structure, the glycine cleavage system is composed of four proteins: P, T, L and H. In this organism, the P 'protein' is a heterodimer of two subunits. The cofactor is pyridoxal 5'-phosphate.

It catalyses the reaction N(6)-[(R)-lipoyl]-L-lysyl-[glycine-cleavage complex H protein] + glycine + H(+) = N(6)-[(R)-S(8)-aminomethyldihydrolipoyl]-L-lysyl-[glycine-cleavage complex H protein] + CO2. In terms of biological role, the glycine cleavage system catalyzes the degradation of glycine. The P protein binds the alpha-amino group of glycine through its pyridoxal phosphate cofactor; CO(2) is released and the remaining methylamine moiety is then transferred to the lipoamide cofactor of the H protein. The polypeptide is Probable glycine dehydrogenase (decarboxylating) subunit 2 (Lysinibacillus sphaericus (strain C3-41)).